Consider the following 121-residue polypeptide: Basic phospholipase A2 homolog (121 aa).

7 disulfides stabilise this stretch: C26-C115, C28-C44, C43-C95, C49-C121, C50-C88, C57-C81, and C75-C86.

Belongs to the phospholipase A2 family. Group II subfamily. K49 sub-subfamily. Homodimer. In terms of tissue distribution, expressed by the venom gland.

Its subcellular location is the secreted. Snake venom phospholipase A2 homolog that lacks enzymatic activity, but has myotoxic and cytolytic activities. The chain is Basic phospholipase A2 homolog from Metlapilcoatlus nummifer (Mexican jumping pitviper).